A 289-amino-acid polypeptide reads, in one-letter code: MSKAREIRTKIASIKNTQKITRAMELVAASKMRKAQDRMAMSRPYASKIRKVISHVAASHAEYPHPYLQQRENIKRVGYIIVTTDRGLCGGLNVNLFRTAIADMKKWQADNIGMDLCVIGRKGEAFFRRYGGNVLAVADHLGDAPEVQDIIGIVKVMLDQYDKQQIDAIYIATNEFVNTMVQKPLVRQLLPLKTDEEEVEGGYWDYIYEPDESKDLLEMLLVRYIESQVYQAVIENIACEQSARMVAMKNATENAGQLIDELRLIYNKARQAGITREIAEIVAGAAAVE.

The protein belongs to the ATPase gamma chain family. In terms of assembly, F-type ATPases have 2 components, CF(1) - the catalytic core - and CF(0) - the membrane proton channel. CF(1) has five subunits: alpha(3), beta(3), gamma(1), delta(1), epsilon(1). CF(0) has three main subunits: a, b and c.

The protein localises to the cell inner membrane. Its function is as follows. Produces ATP from ADP in the presence of a proton gradient across the membrane. The gamma chain is believed to be important in regulating ATPase activity and the flow of protons through the CF(0) complex. This is ATP synthase gamma chain from Coxiella burnetii (strain Dugway 5J108-111).